The chain runs to 96 residues: UPF0235 protein Sputw3181_1321 (96 aa).

It belongs to the UPF0235 family.

The protein is UPF0235 protein Sputw3181_1321 of Shewanella sp. (strain W3-18-1).